Consider the following 84-residue polypeptide: Insulin-like peptide 05 (84 aa).

A signal peptide spans 1 to 22; sequence MKTPILFVVVVAVLIVTDSAEG. Residues 23–37 constitute a propeptide that is removed on maturation; that stretch reads FKGKANSFLKPLQRR. 3 cysteine pairs are disulfide-bonded: Cys-43–Cys-48, Cys-44–Cys-73, and Cys-57–Cys-61.

Belongs to the insulin family.

It localises to the secreted. In terms of biological role, insulin decreases blood glucose concentration. May have evolved to activate insulin receptors (INSR) in vertebrates. Molecular docking studies reveals unique interaction with the human insulin receptor. In vivo, insulin-like peptide injection reduces blood glucose levels in two models of zebrafish diabetes (streptozotocin- and glucose-induced). Also shorter swimming distance of zebrafish larvae, an effect which is not observed with human insulin. In Exaiptasia diaphana (Tropical sea anemone), this protein is Insulin-like peptide 05.